The following is a 541-amino-acid chain: Light-independent protochlorophyllide reductase subunit B (541 aa).

Asp-36 lines the [4Fe-4S] cluster pocket. The active-site Proton donor is the Asp-286. Position 421–422 (421–422 (GM)) interacts with substrate.

This sequence belongs to the ChlB/BchB/BchZ family. Protochlorophyllide reductase is composed of three subunits; BchL, BchN and BchB. Forms a heterotetramer of two BchB and two BchN subunits. Requires [4Fe-4S] cluster as cofactor.

It carries out the reaction chlorophyllide a + oxidized 2[4Fe-4S]-[ferredoxin] + 2 ADP + 2 phosphate = protochlorophyllide a + reduced 2[4Fe-4S]-[ferredoxin] + 2 ATP + 2 H2O. It functions in the pathway porphyrin-containing compound metabolism; bacteriochlorophyll biosynthesis (light-independent). Component of the dark-operative protochlorophyllide reductase (DPOR) that uses Mg-ATP and reduced ferredoxin to reduce ring D of protochlorophyllide (Pchlide) to form chlorophyllide a (Chlide). This reaction is light-independent. The NB-protein (BchN-BchB) is the catalytic component of the complex. The protein is Light-independent protochlorophyllide reductase subunit B of Chloroflexus aurantiacus (strain ATCC 29364 / DSM 637 / Y-400-fl).